The following is a 71-amino-acid chain: MKENIHPTTFKAKMTCACGYEAEALSTKGEVVNVEICSQCHPFYTGKQRFVDTAGRIDRFRKKYAKFGEGK.

4 residues coordinate Zn(2+): cysteine 16, cysteine 18, cysteine 37, and cysteine 40.

This sequence belongs to the bacterial ribosomal protein bL31 family. Type A subfamily. In terms of assembly, part of the 50S ribosomal subunit. Zn(2+) is required as a cofactor.

Binds the 23S rRNA. This is Large ribosomal subunit protein bL31 from Nitratidesulfovibrio vulgaris (strain DSM 19637 / Miyazaki F) (Desulfovibrio vulgaris).